Reading from the N-terminus, the 235-residue chain is Octanoyltransferase (235 aa).

The BPL/LPL catalytic domain maps to 28 to 203 (GRAEETLLLL…PFAGLPADAL (176 aa)). Residues 66–73 (RGGDVTWH), 133–135 (SIG), and 146–148 (GFA) each bind substrate. Cysteine 164 acts as the Acyl-thioester intermediate in catalysis. The disordered stretch occupies residues 202–235 (ALPEQPRDAVQPSSCDDVHAPSTTSRRPPCPLTV).

Belongs to the LipB family.

It is found in the cytoplasm. The catalysed reaction is octanoyl-[ACP] + L-lysyl-[protein] = N(6)-octanoyl-L-lysyl-[protein] + holo-[ACP] + H(+). It functions in the pathway protein modification; protein lipoylation via endogenous pathway; protein N(6)-(lipoyl)lysine from octanoyl-[acyl-carrier-protein]: step 1/2. Its function is as follows. Catalyzes the transfer of endogenously produced octanoic acid from octanoyl-acyl-carrier-protein onto the lipoyl domains of lipoate-dependent enzymes. Lipoyl-ACP can also act as a substrate although octanoyl-ACP is likely to be the physiological substrate. This is Octanoyltransferase from Geobacter sulfurreducens (strain ATCC 51573 / DSM 12127 / PCA).